The chain runs to 494 residues: Argininosuccinate synthase, chloroplastic (494 aa).

A chloroplast-targeting transit peptide spans 1–73 (MAEISATSFP…SRSCKNQAIR (73 aa)). Ala-74 bears the N-acetylalanine mark. ATP-binding positions include 102–110 (AYSGGLDTS) and Ala-129. Positions 181 and 186 each coordinate L-citrulline. Gly-211 serves as a coordination point for ATP. Residues Thr-213, Asn-217, and Asp-218 each contribute to the L-aspartate site. Residue Asn-217 participates in L-citrulline binding. Residues Arg-221, Ser-270, Ser-279, Glu-355, and Tyr-367 each coordinate L-citrulline.

This sequence belongs to the argininosuccinate synthase family. Type 1 subfamily. As to quaternary structure, homotetramer.

Its subcellular location is the plastid. It localises to the chloroplast. It catalyses the reaction L-citrulline + L-aspartate + ATP = 2-(N(omega)-L-arginino)succinate + AMP + diphosphate + H(+). It functions in the pathway amino-acid biosynthesis; L-arginine biosynthesis; L-arginine from L-ornithine and carbamoyl phosphate: step 2/3. The protein is Argininosuccinate synthase, chloroplastic of Arabidopsis thaliana (Mouse-ear cress).